The chain runs to 225 residues: MAPRPLNEIVEAGWAKALEPVAGQITSMGEFLRAEIAAGRTYLPAGANVLRAFQQPFDDVRVLIVGQDPYPTPGHAVGLSFSVAPEVRPLPGSLVNIFRELNTDLNLPQPANGDLTPWTRQGVLLLNRALTTAPRKPAAHRGKGWEEVTEQAIRALAARGKPMVSILWGRDARNLRPLLGDLPALESAHPSPMSADRGFFGSRPFSRANDLLMRLGGQPVDWRLP.

The active-site Proton acceptor is D68.

It belongs to the uracil-DNA glycosylase (UDG) superfamily. UNG family.

Its subcellular location is the cytoplasm. It carries out the reaction Hydrolyzes single-stranded DNA or mismatched double-stranded DNA and polynucleotides, releasing free uracil.. Its function is as follows. Excises uracil residues from the DNA which can arise as a result of misincorporation of dUMP residues by DNA polymerase or due to deamination of cytosine. The protein is Uracil-DNA glycosylase 1 (ung1) of Streptomyces coelicolor (strain ATCC BAA-471 / A3(2) / M145).